The chain runs to 908 residues: Alanine--tRNA ligase (908 aa).

4 residues coordinate Zn(2+): H596, H600, C698, and H702.

This sequence belongs to the class-II aminoacyl-tRNA synthetase family. It depends on Zn(2+) as a cofactor.

It localises to the cytoplasm. The enzyme catalyses tRNA(Ala) + L-alanine + ATP = L-alanyl-tRNA(Ala) + AMP + diphosphate. Catalyzes the attachment of alanine to tRNA(Ala) in a two-step reaction: alanine is first activated by ATP to form Ala-AMP and then transferred to the acceptor end of tRNA(Ala). Also edits incorrectly charged Ser-tRNA(Ala) and Gly-tRNA(Ala) via its editing domain. The chain is Alanine--tRNA ligase from Lysinibacillus sphaericus (strain C3-41).